The sequence spans 357 residues: Peptide chain release factor 1 (357 aa).

Residue Q232 is modified to N5-methylglutamine.

This sequence belongs to the prokaryotic/mitochondrial release factor family. Post-translationally, methylated by PrmC. Methylation increases the termination efficiency of RF1.

The protein resides in the cytoplasm. In terms of biological role, peptide chain release factor 1 directs the termination of translation in response to the peptide chain termination codons UAG and UAA. The chain is Peptide chain release factor 1 from Oleidesulfovibrio alaskensis (strain ATCC BAA-1058 / DSM 17464 / G20) (Desulfovibrio alaskensis).